A 363-amino-acid polypeptide reads, in one-letter code: 43 kDa protein (363 aa).

The polypeptide is 43 kDa protein (P43) (Lepidoptera (butterflies and moths)).